The chain runs to 196 residues: Imidazoleglycerol-phosphate dehydratase (196 aa).

This sequence belongs to the imidazoleglycerol-phosphate dehydratase family.

The protein localises to the cytoplasm. The catalysed reaction is D-erythro-1-(imidazol-4-yl)glycerol 3-phosphate = 3-(imidazol-4-yl)-2-oxopropyl phosphate + H2O. It participates in amino-acid biosynthesis; L-histidine biosynthesis; L-histidine from 5-phospho-alpha-D-ribose 1-diphosphate: step 6/9. The protein is Imidazoleglycerol-phosphate dehydratase of Caulobacter vibrioides (strain ATCC 19089 / CIP 103742 / CB 15) (Caulobacter crescentus).